The primary structure comprises 138 residues: Membrane glycoprotein UL139 (138 aa).

The first 15 residues, 1-15, serve as a signal peptide directing secretion; the sequence is MLWILVLFALAASAS. The disordered stretch occupies residues 17–37; that stretch reads TTTGTSSNSSQSTSAGTTNTT. The chain crosses the membrane as a helical span at residues 64-84; it reads GWTLSGLLLIFTCCLCCFWLV. Residues 113–129 are compositionally biased toward polar residues; the sequence is SDATLPMGTTGSYTPPQ. The segment at 113-138 is disordered; that stretch reads SDATLPMGTTGSYTPPQDGSFPPPPR.

Its subcellular location is the host membrane. This chain is Membrane glycoprotein UL139 (UL139), found in Homo sapiens (Human).